The primary structure comprises 122 residues: Large ribosomal subunit protein uL14 (122 aa).

This sequence belongs to the universal ribosomal protein uL14 family. In terms of assembly, part of the 50S ribosomal subunit. Forms a cluster with proteins L3 and L19. In the 70S ribosome, L14 and L19 interact and together make contacts with the 16S rRNA in bridges B5 and B8.

Its function is as follows. Binds to 23S rRNA. Forms part of two intersubunit bridges in the 70S ribosome. In Bordetella parapertussis (strain 12822 / ATCC BAA-587 / NCTC 13253), this protein is Large ribosomal subunit protein uL14.